The chain runs to 1349 residues: Zinc finger protein 804B (1349 aa).

The C2H2-type zinc-finger motif lies at 55 to 79; that stretch reads FYCELCDKQYHKHQEFDNHINSYDH. Residues 985–1010 are disordered; the sequence is YASESRNDQDSAIPRTTEKDKSKSSH.

The polypeptide is Zinc finger protein 804B (ZNF804B) (Homo sapiens (Human)).